A 93-amino-acid polypeptide reads, in one-letter code: Cobalt transport protein CbiN (93 aa).

The next 2 helical transmembrane spans lie at 5–25 (LMLLAMVVALVILPFFINHGG) and 63–83 (LLFTLQGSLGAAVIFYILGYC).

This sequence belongs to the CbiN family. In terms of assembly, forms an energy-coupling factor (ECF) transporter complex composed of an ATP-binding protein (A component, CbiO), a transmembrane protein (T component, CbiQ) and 2 possible substrate-capture proteins (S components, CbiM and CbiN) of unknown stoichimetry.

It is found in the cell inner membrane. The protein operates within cofactor biosynthesis; adenosylcobalamin biosynthesis. Its function is as follows. Part of the energy-coupling factor (ECF) transporter complex CbiMNOQ involved in cobalt import. This is Cobalt transport protein CbiN from Salmonella arizonae (strain ATCC BAA-731 / CDC346-86 / RSK2980).